The chain runs to 59 residues: Large ribosomal subunit protein bL32 (59 aa).

The segment covering 1–16 (MAVPKRKTSPSKRGMR) has biased composition (basic residues). Residues 1 to 59 (MAVPKRKTSPSKRGMRRSADALKAPTYVEDKNSGELRRPHHIDLKSGMYRGRQVLEAKE) are disordered. Over residues 28 to 44 (VEDKNSGELRRPHHIDL) the composition is skewed to basic and acidic residues.

The protein belongs to the bacterial ribosomal protein bL32 family.

The chain is Large ribosomal subunit protein bL32 from Brucella anthropi (strain ATCC 49188 / DSM 6882 / CCUG 24695 / JCM 21032 / LMG 3331 / NBRC 15819 / NCTC 12168 / Alc 37) (Ochrobactrum anthropi).